The sequence spans 275 residues: Large ribosomal subunit protein uL2 (275 aa).

Disordered regions lie at residues 28–54 and 223–275; these read APHA…TRHI and VAMN…RNKK.

It belongs to the universal ribosomal protein uL2 family. As to quaternary structure, part of the 50S ribosomal subunit. Forms a bridge to the 30S subunit in the 70S ribosome.

In terms of biological role, one of the primary rRNA binding proteins. Required for association of the 30S and 50S subunits to form the 70S ribosome, for tRNA binding and peptide bond formation. It has been suggested to have peptidyltransferase activity; this is somewhat controversial. Makes several contacts with the 16S rRNA in the 70S ribosome. The chain is Large ribosomal subunit protein uL2 from Saccharophagus degradans (strain 2-40 / ATCC 43961 / DSM 17024).